Consider the following 397-residue polypeptide: Chorismate synthase (397 aa).

NADP(+) is bound by residues Arg40 and Arg46. FMN is bound by residues 129-131 (RSS), 257-258 (QA), Gly302, 317-321 (KPISS), and Arg343.

This sequence belongs to the chorismate synthase family. In terms of assembly, homotetramer. FMNH2 is required as a cofactor.

The catalysed reaction is 5-O-(1-carboxyvinyl)-3-phosphoshikimate = chorismate + phosphate. It participates in metabolic intermediate biosynthesis; chorismate biosynthesis; chorismate from D-erythrose 4-phosphate and phosphoenolpyruvate: step 7/7. Functionally, catalyzes the anti-1,4-elimination of the C-3 phosphate and the C-6 proR hydrogen from 5-enolpyruvylshikimate-3-phosphate (EPSP) to yield chorismate, which is the branch point compound that serves as the starting substrate for the three terminal pathways of aromatic amino acid biosynthesis. This reaction introduces a second double bond into the aromatic ring system. This chain is Chorismate synthase, found in Pelodictyon phaeoclathratiforme (strain DSM 5477 / BU-1).